The chain runs to 237 residues: Small ribosomal subunit protein eS4 (237 aa).

Positions 37–99 (VPLLIVLRDV…REEYYRIFPD (63 aa)) constitute an S4 RNA-binding domain.

The protein belongs to the eukaryotic ribosomal protein eS4 family.

The protein is Small ribosomal subunit protein eS4 of Natronomonas pharaonis (strain ATCC 35678 / DSM 2160 / CIP 103997 / JCM 8858 / NBRC 14720 / NCIMB 2260 / Gabara) (Halobacterium pharaonis).